A 109-amino-acid chain; its full sequence is Nascent polypeptide-associated complex protein (109 aa).

The 67-residue stretch at proline 3 to isoleucine 69 folds into the NAC-A/B domain.

The protein belongs to the NAC-alpha family. As to quaternary structure, homodimer. Interacts with the ribosome. Binds ribosomal RNA.

Contacts the emerging nascent chain on the ribosome. The polypeptide is Nascent polypeptide-associated complex protein (Pyrococcus abyssi (strain GE5 / Orsay)).